The following is a 469-amino-acid chain: UDP-N-acetylmuramate--L-alanine ligase (469 aa).

ATP is bound at residue 113–119 (GTHGKTT).

Belongs to the MurCDEF family.

The protein resides in the cytoplasm. The enzyme catalyses UDP-N-acetyl-alpha-D-muramate + L-alanine + ATP = UDP-N-acetyl-alpha-D-muramoyl-L-alanine + ADP + phosphate + H(+). Its pathway is cell wall biogenesis; peptidoglycan biosynthesis. Functionally, cell wall formation. In Neisseria meningitidis serogroup B (strain ATCC BAA-335 / MC58), this protein is UDP-N-acetylmuramate--L-alanine ligase.